A 38-amino-acid chain; its full sequence is Cytochrome b6-f complex subunit 5 (38 aa).

The chain crosses the membrane as a helical span at residues leucine 5–alanine 25.

This sequence belongs to the PetG family. As to quaternary structure, the 4 large subunits of the cytochrome b6-f complex are cytochrome b6, subunit IV (17 kDa polypeptide, PetD), cytochrome f and the Rieske protein, while the 4 small subunits are PetG, PetL, PetM and PetN. The complex functions as a dimer.

The protein localises to the plastid. It is found in the chloroplast thylakoid membrane. Functionally, component of the cytochrome b6-f complex, which mediates electron transfer between photosystem II (PSII) and photosystem I (PSI), cyclic electron flow around PSI, and state transitions. PetG is required for either the stability or assembly of the cytochrome b6-f complex. This Huperzia lucidula (Shining clubmoss) protein is Cytochrome b6-f complex subunit 5.